Reading from the N-terminus, the 845-residue chain is MPLSYQHFRKLLLLDDGTEAGPLEEELPRLADADLNRRVAEDLNLGNLNVSIPWTHKVGNFTGLYSSTVPIFNPEWQTPSFPNIHLQEDIINRCQQFVGPLTVNEKRRLKLIMPARFYPTHTKYLPLDKGIKPYYPDQVVNHYFQTRHYLHTLWKAGILYKRETTRSASFCGSPYSWEQELQHGRLVIKTSQRHGDESFCSQPSGILSRSSVGPCIRSQLKQSRLGLQPHQGPLASSQPGRSGSIRARVHPSTRRYFGVEPSGSGHIDHSVNNSSSCLHQSAVRKAAYSHLSTSKRQSSSGHAVEFHCLPPNSAGSQSQGSVSSCWWLQFRNSKPCSEYCLSHLVNLREDWGPCDEHGEHHIRIPRTPARVTGGVFLVDKNPHNTAESRLVVDFSQFSRGITRVSWPKFAVPNLQSLTNLLSSNLSWLSLDVSAAFYHIPLHPAAMPHLLIGSSGLSRYVARLSSNSRINNNQYGTMQNLHDSCSRQLYVSLMLLYKTYGWKLHLYSHPIVLGFRKIPMGVGLSPFLLAQFTSAICSVVRRAFPHCLAFSYMDDVVLGAKSVQHREALYTAVTNFLLSLGIHLNPNKTKRWGYSLNFMGYIIGSWGTLPQDHIVQKIKHCFRKLPVNRPIDWKVCQRIVGLLGFAAPFTQCGYPALMPLYACIQAKQAFTFSPTYKAFLSKQYMNLYPVARQRPGLCQVFADATPTGWGLAIGHQRMRGTFVAPLPIHTAELLAACFARSRSGAKLIGTDNSVVLSRKYTSFPWLLGCAANWILRGTSFVYVPSALNPADDPSRGRLGLYRPLLRLPFQPTTGRTSLYAVSPSVPSHLPVRVHFASPLHVAWRPP.

The terminal protein domain (TP) stretch occupies residues 1-179 (MPLSYQHFRK…FCGSPYSWEQ (179 aa)). Positions 180–348 (ELQHGRLVIK…YCLSHLVNLR (169 aa)) are spacer. The segment at 226-245 (GLQPHQGPLASSQPGRSGSI) is disordered. The tract at residues 349–692 (EDWGPCDEHG…YMNLYPVARQ (344 aa)) is polymerase/reverse transcriptase domain (RT). Residues 359 to 602 (EHHIRIPRTP…YSLNFMGYII (244 aa)) enclose the Reverse transcriptase domain. Positions 431, 553, and 554 each coordinate Mg(2+).

The protein belongs to the hepadnaviridae P protein family.

It catalyses the reaction DNA(n) + a 2'-deoxyribonucleoside 5'-triphosphate = DNA(n+1) + diphosphate. The enzyme catalyses Endonucleolytic cleavage to 5'-phosphomonoester.. Activated by host HSP70 and HSP40 in vitro to be able to bind the epsilon loop of the pgRNA. Because deletion of the RNase H region renders the protein partly chaperone-independent, the chaperones may be needed indirectly to relieve occlusion of the RNA-binding site by this domain. Inhibited by several reverse-transcriptase inhibitors: Lamivudine, Adefovir and Entecavir. Multifunctional enzyme that converts the viral RNA genome into dsDNA in viral cytoplasmic capsids. This enzyme displays a DNA polymerase activity that can copy either DNA or RNA templates, and a ribonuclease H (RNase H) activity that cleaves the RNA strand of RNA-DNA heteroduplexes in a partially processive 3'- to 5'-endonucleasic mode. Neo-synthesized pregenomic RNA (pgRNA) are encapsidated together with the P protein, and reverse-transcribed inside the nucleocapsid. Initiation of reverse-transcription occurs first by binding the epsilon loop on the pgRNA genome, and is initiated by protein priming, thereby the 5'-end of (-)DNA is covalently linked to P protein. Partial (+)DNA is synthesized from the (-)DNA template and generates the relaxed circular DNA (RC-DNA) genome. After budding and infection, the RC-DNA migrates in the nucleus, and is converted into a plasmid-like covalently closed circular DNA (cccDNA). The activity of P protein does not seem to be necessary for cccDNA generation, and is presumably released from (+)DNA by host nuclear DNA repair machinery. This is Protein P from Homo sapiens (Human).